Reading from the N-terminus, the 137-residue chain is UPF0275 protein PM0489 (137 aa).

The protein belongs to the UPF0275 family.

The sequence is that of UPF0275 protein PM0489 from Pasteurella multocida (strain Pm70).